Reading from the N-terminus, the 2137-residue chain is MVSQVLQLLRQGVWAALTGGWYHDPEQSKFTNSCHLYLWLFLLLLPLALHLAFPPNAIIVFFYCSAVTIFFTIIKLVSYRLHLMFDKGEVIQQKPSRKEEKPNKDKEAKGEHITNHRNPSNNRQIHNGKKEEASRNLSTPPLRCSSRGQSITSHHSSGPLELSAQETVEDLKGVILLEDHPIAPVSSTSPGIKVESLPASQAHMLETTTKSVIPVKPVATETLINGKGKERGGKGQPPLRHRSEGGLVDKGPLKKLPHLSLSQYDLLETDVSFQPWGSENSVLIPEPVSCPRGSIRERVQSKSPQDSLSSSCPQCDTIVAKPVEEPADTSCQVDTSCQGDLPLHQEVDSSDSEVAVTLIDTSQPGDPLSLHEPIKIVITMSSTPNSMTDLESSLHLRVVGTEKTSVKSDAEPTNPGAAGSPNAEQISIPVITLDLPEGGGGGVPCPEGNGSERTPERLKTRVSTNQCSGYGSGEGGNAIKDHSSSSREPWESVSRLTPDTGSESKVGKEGQTNLDPSSCKSSHEKRHARVLSVDSGTDVFLSKSSAEIVNDTEKTMPTSKSDLEAKEGQMPNESNFLEFVSLLESINTSKMTASSQLNGSAEQNEESGLLRDNCSQEKKEEILENEKPSGHSSKQGKPDLQSQDHTSTGPACTQPAKTTAFFQGNRQRQIIYRVTSQQDSSVLQVISGPETSVQEEISVDAMHVFIDEHGEIRSCYLKSGNQKEGPLQPLPSNNDCLSQAREMQVSSSSTTTSESQDPSSGDPAVSALQQQLLLMVARRTQSETPRHVSQDLEASSCSSTQGKFNREQFYKFIIFPGKWIKVWYDRLTLLALLDRTEDIKENVLAILLIVLVSLLGFLTLSQGFCKDMWVLLFCLVMASCQYSLLKSVQPDPASPIHGHNQIITYSRPIYFCVLCGLILLLDTGAKARHPPSYVVYGLKLFSPVFLQSARDYLIVFLYCFPAISLLGLFPQINTFCTYLLEQIDMLFFGGSAVSGITSAVYSVARSVLAAALLHAVCFSAVKEPWSMQHIPALFSAFCGLLVALSYHLSRQSSDPSVLMSFIQCRLFPKFLHQNLAESAADPLPKKMKDSVTDVLKWDLIVCAVVAVLSFAVSASTVFLSLRPFLSIVLFALAGAVGFVTHYVLPQLRKHHPWMWISHPILKNKEYHQREVRDVAHLMWFERLYVWLQCFEKYILYPALILNALTIDAFLISNHRRLGTHWDIFLMIIAGMKLLRTSFCNPVYQFINLSFTVIFFHFDYKDISESFLLDFFMVSILFSKLGDLLHKLQFVLTYVAPWQMAWGSSFHVFAQLFAIPHSAMLFFQTIATSIFSTPLSPFLGSVIFITSYVRPVKFWEKNYNTRRVDNSNTRLAVQIERDPGNDDNNLNSIFYEHLTRTLQESLCGDLVLGRWGNYSSGDCFILASDDLNAFVHLIEIGNGLVTFQLRGLEFRGTYCQQREVEAIMEGDEEDRGCCCCKPGHLPHLLSCNAAFHLRWLTWEITQTQYILEGYSILDNNAATMLQVFDLRRILIRYYIKSIIYYMVTSPKLLSWIKNESLLKSLQPFAKWHYIERDLAMFNINIDDDYVPCLQGITRASFCNVYLEWIQHCARKRQEPSTTLDSDEDSPLVTLSFALCTLGRRALGTAAHNMAISLDSFLYGLHVLFKGDFRITARDEWVFADMDLLHKVVAPAIRMSLKLHQDQFTCPDEYEDPAVLYEAIQSFEKKVVICHEGDPAWRGAVLSNKEELLTLRHVVDEGADEYKVIMLHRSFLSFKVIKVNKECVRGLWAGQQQELIFLRNRNPERGSIQNNKQVLRNLINSSCDQPLGYPMYVSPLTTSYLGTHRQLKNIWGGPITLDRIRTWFWTKWVRMRKDCNARQHSGGNIEDVDGGGAPTTGGNNAPSGGSQESSAEQPRKGGAQHGVSSCEGTQRTGRRKGRSQSVQAHSALSQRPPMLSSSGPILESRQTFLQTSTSVHELAQRLSGSRLSLHASATSLHSQPPPVTTTGHLSVRERAEALIRSSLGSSTSSTLSFLFGKRSFSSALVISGLSAAEGGNTSDTQSSSSVNIVMGPSARAASQATRHLSEPCEPPDATEQGQLHDRCLAEAVADTLGVVCRRASQEDMGLDDTASQQSVSDEQ.

The next 2 membrane-spanning stretches (helical) occupy residues 34-54 (CHLYLWLFLLLLPLALHLAFP) and 57-77 (AIIVFFYCSAVTIFFTIIKLV). Disordered regions lie at residues 92–163 (QQKP…LELS), 225–251 (NGKGKERGGKGQPPLRHRSEGGLVDKG), 402–530 (EKTS…HARV), and 545–572 (SAEIVNDTEKTMPTSKSDLEAKEGQMPN). Basic and acidic residues predominate over residues 96–114 (SRKEEKPNKDKEAKGEHIT). The segment covering 116–125 (HRNPSNNRQI) has biased composition (polar residues). Asn-136 carries N-linked (GlcNAc...) asparagine glycosylation. The segment covering 146 to 156 (SRGQSITSHHS) has biased composition (polar residues). Asn-449 carries an N-linked (GlcNAc...) asparagine glycan. Basic and acidic residues predominate over residues 479 to 490 (IKDHSSSSREPW). The segment covering 510–520 (GQTNLDPSSCK) has biased composition (polar residues). N-linked (GlcNAc...) asparagine glycosylation is found at Asn-550, Asn-572, Asn-587, Asn-598, and Asn-613. Over residues 593–602 (ASSQLNGSAE) the composition is skewed to polar residues. Residues 593 to 612 (ASSQLNGSAEQNEESGLLRD) form a disordered region. Disordered stretches follow at residues 621 to 655 (EILENEKPSGHSSKQGKPDLQSQDHTSTGPACTQP) and 740 to 763 (AREMQVSSSSTTTSESQDPSSGDP). Residues 630–655 (GHSSKQGKPDLQSQDHTSTGPACTQP) are compositionally biased toward polar residues. A compositionally biased stretch (low complexity) spans 746-760 (SSSSTTTSESQDPSS). 13 helical membrane-spanning segments follow: residues 844–864 (LAILLIVLVSLLGFLTLSQGF), 868–888 (MWVLLFCLVMASCQYSLLKSV), 901–921 (QIITYSRPIYFCVLCGLILLL), 952–972 (YLIVFLYCFPAISLLGLFPQI), 983–1003 (IDMLFFGGSAVSGITSAVYSV), 1029–1049 (HIPALFSAFCGLLVALSYHLS), 1099–1119 (LIVCAVVAVLSFAVSASTVFL), 1124–1144 (FLSIVLFALAGAVGFVTHYVL), 1193–1213 (YILYPALILNALTIDAFLISN), 1237–1257 (SFCNPVYQFINLSFTVIFFHF), 1265–1285 (SFLLDFFMVSILFSKLGDLLH), 1302–1322 (GSSFHVFAQLFAIPHSAMLFF), and 1324–1344 (TIATSIFSTPLSPFLGSVIFI). Residues Asn-1412, Asn-1553, and Asn-1818 are each glycosylated (N-linked (GlcNAc...) asparagine). Residues 1876-1958 (RQHSGGNIED…RPPMLSSSGP (83 aa)) form a disordered region. Polar residues-rich tracts occupy residues 1901–1910 (SGGSQESSAE), 1920–1929 (GVSSCEGTQR), and 1937–1958 (SQSVQAHSALSQRPPMLSSSGP). Asn-2054 is a glycosylation site (N-linked (GlcNAc...) asparagine).

This sequence belongs to the pecanex family.

The protein localises to the membrane. In terms of biological role, may play a role in tumorigenesis of colorectal carcinomas with high microsatellite instability (MSI-H). This Homo sapiens (Human) protein is Pecanex-like protein 2.